The primary structure comprises 1024 residues: Beta-galactosidase 2 (1024 aa).

The substrate site is built by asparagine 103 and aspartate 202. Aspartate 202 serves as a coordination point for Na(+). Glutamate 417, histidine 419, and glutamate 462 together coordinate Mg(2+). Residues glutamate 462 and 538–541 (EYAH) each bind substrate. Residue glutamate 462 is the Proton donor of the active site. Glutamate 538 serves as the catalytic Nucleophile. Asparagine 598 is a Mg(2+) binding site. 2 residues coordinate Na(+): phenylalanine 602 and asparagine 605. The substrate site is built by asparagine 605 and tryptophan 1000.

It belongs to the glycosyl hydrolase 2 family. Homotetramer. Mg(2+) is required as a cofactor. It depends on Na(+) as a cofactor.

It carries out the reaction Hydrolysis of terminal non-reducing beta-D-galactose residues in beta-D-galactosides.. This Klebsiella pneumoniae subsp. pneumoniae (strain ATCC 700721 / MGH 78578) protein is Beta-galactosidase 2.